The chain runs to 122 residues: Small ribosomal subunit protein uS13 (122 aa).

Residues 94-122 (GLPVRGQSTQKNARTRKGPRKTVAGKKGK) form a disordered region. Basic residues predominate over residues 106–122 (ARTRKGPRKTVAGKKGK).

The protein belongs to the universal ribosomal protein uS13 family. Part of the 30S ribosomal subunit. Forms a loose heterodimer with protein S19. Forms two bridges to the 50S subunit in the 70S ribosome.

Functionally, located at the top of the head of the 30S subunit, it contacts several helices of the 16S rRNA. In the 70S ribosome it contacts the 23S rRNA (bridge B1a) and protein L5 of the 50S subunit (bridge B1b), connecting the 2 subunits; these bridges are implicated in subunit movement. Contacts the tRNAs in the A and P-sites. This is Small ribosomal subunit protein uS13 from Mycoplasmopsis synoviae (strain 53) (Mycoplasma synoviae).